The primary structure comprises 694 residues: Elongation factor G (694 aa).

One can recognise a tr-type G domain in the interval 8–287; that stretch reads EDYRNFGIMA…AVVEFLPAPT (280 aa). Residues 17-24, 86-90, and 140-143 contribute to the GTP site; these read AHIDAGKT, DTPGH, and NKMD.

Belongs to the TRAFAC class translation factor GTPase superfamily. Classic translation factor GTPase family. EF-G/EF-2 subfamily.

It localises to the cytoplasm. Its function is as follows. Catalyzes the GTP-dependent ribosomal translocation step during translation elongation. During this step, the ribosome changes from the pre-translocational (PRE) to the post-translocational (POST) state as the newly formed A-site-bound peptidyl-tRNA and P-site-bound deacylated tRNA move to the P and E sites, respectively. Catalyzes the coordinated movement of the two tRNA molecules, the mRNA and conformational changes in the ribosome. The protein is Elongation factor G of Brucella ovis (strain ATCC 25840 / 63/290 / NCTC 10512).